Reading from the N-terminus, the 681-residue chain is SRSF protein kinase 2 (681 aa).

A disordered region spans residues 1–63; sequence MSVNSEKSSS…EQEDPADYCK (63 aa). Over residues 22–41 the composition is skewed to pro residues; sequence LVPPPPPPPPPPPLPDPAPP. A compositionally biased stretch (acidic residues) spans 42–59; sequence EPEEEILGSDDEEQEDPA. Ser50 bears the Phosphoserine mark. The region spanning 79 to 681 is the Protein kinase domain; sequence YHVIRKLGWG…ECLRHPWLNS (603 aa). ATP is bound by residues 85-93 and Lys108; that span reads LGWGHFSTV. Residue Asp212 is the Proton acceptor of the active site. Disordered regions lie at residues 237–270, 302–452, and 467–499; these read WQKA…KKKL, ENIT…PLFS, and GSPL…KTKT. A phosphothreonine mark is found at Thr331 and Thr332. A Phosphoserine modification is found at Ser378. The segment covering 395-419 has biased composition (acidic residues); sequence QLEDEEDDEDDCANPEEYNLDEPNA. The span at 421-431 shows a compositional bias: polar residues; sequence SDYTYSSSYEQ. Ser468 carries the phosphoserine modification. Phosphothreonine is present on Thr471. Ser477, Ser479, and Ser483 each carry phosphoserine. Thr485 is modified (phosphothreonine; by PKB/AKT1). 2 positions are modified to phosphoserine: Ser487 and Ser490. Ser581 bears the Phosphoserine; by CK2 mark.

Belongs to the protein kinase superfamily. CMGC Ser/Thr protein kinase family. As to quaternary structure, associates with U4/U6-U5 tri-small nuclear ribonucleoproteins (U4/U6-U5 tri-snRNPs). Interacts with PKB/AKT1 in a phosphorylation-dependent manner. The phosphorylated form (by PKB/AKT1) interacts with YWHAB and YWHAE. Interaction with YWHAB suppresses its cleavage by caspases and inhibits the release of its N-terminal pro-apoptotic fragment. Interacts with SFN. Interacts with ACIN1. Interacts with POLR2A/RNA polymerase II; the interaction occurs during the co-transcriptional formation of inappropriate R-loops. The cofactor is Mg(2+). In terms of processing, phosphorylation at Thr-485 by PKB/AKT1 enhances its stimulatory activity in triggering cyclin-D1 (CCND1) expression and promoting apoptosis in neurons, which can be blocked by YWHAB. It also enhances its protein kinase activity toward ACIN1 and SRSF2, promotes its nuclear translocation and prevents its proteolytic cleavage. Post-translationally, proteolytically cleaved at Asp-137 and Asp-401 by caspase-3 during apoptotic cell death. Cleavage at Asp-137 which is the major site of cleavage, produces a small N-terminal fragment that translocates into nucleus and promotes VP16-induced apoptosis. Expressed in testes, lung and brain.

It is found in the cytoplasm. Its subcellular location is the nucleus. The protein localises to the nucleoplasm. The protein resides in the nucleus speckle. It localises to the chromosome. The catalysed reaction is L-seryl-[protein] + ATP = O-phospho-L-seryl-[protein] + ADP + H(+). It carries out the reaction L-threonyl-[protein] + ATP = O-phospho-L-threonyl-[protein] + ADP + H(+). Its activity is regulated as follows. Activated by phosphorylation on Ser-50 and Ser-581. Its function is as follows. Serine/arginine-rich protein-specific kinase which specifically phosphorylates its substrates at serine residues located in regions rich in arginine/serine dipeptides, known as RS domains and is involved in the phosphorylation of SR splicing factors and the regulation of splicing. Promotes neuronal apoptosis by up-regulating cyclin-D1 (CCND1) expression. This is done by the phosphorylation of SRSF2, leading to the suppression of p53/TP53 phosphorylation thereby relieving the repressive effect of p53/TP53 on cyclin-D1 (CCND1) expression. Phosphorylates ACIN1, and redistributes it from the nuclear speckles to the nucleoplasm, resulting in cyclin A1 but not cyclin A2 up-regulation. Plays an essential role in spliceosomal B complex formation via the phosphorylation of DDX23/PRP28. Probably by phosphorylating DDX23, leads to the suppression of incorrect R-loops formed during transcription; R-loops are composed of a DNA:RNA hybrid and the associated non-template single-stranded DNA. In Mus musculus (Mouse), this protein is SRSF protein kinase 2.